The following is a 932-amino-acid chain: Potassium voltage-gated channel subfamily KQT member 5 (932 aa).

Over 1 to 125 (MPRHHAGGEE…YNVLERPRGW (125 aa)) the chain is Cytoplasmic. S88 carries the phosphoserine modification. The helical transmembrane segment at 126–146 (AFIYHAFVFLLVFGCLILSVF) threads the bilayer. Topologically, residues 147-156 (STIPEHTKLA) are extracellular. Residues 157–177 (SSCLLILEFVMIVVFGLEFII) form a helical membrane-spanning segment. The Cytoplasmic segment spans residues 178 to 200 (RIWSAGCCCRYRGWQGRLRFARK). The chain crosses the membrane as a helical span at residues 201–221 (PFCVIDTIVLIASIAVVSAKT). Residues 222–229 (QGNIFATS) lie on the Extracellular side of the membrane. Residues 230–252 (ALRSLRFLQILRMVRMDRRGGTW) form a helical; Voltage-sensor membrane-spanning segment. The a 1,2-diacyl-sn-glycero-3-phospho-(1D-myo-inositol-4,5-bisphosphate) site is built by R248 and K264. Residues 253-266 (KLLGSVVYAHSKEL) lie on the Cytoplasmic side of the membrane. Residues 267-287 (ITAWYIGFLVLIFSSFLVYLV) form a helical membrane-spanning segment. Residues 288 to 298 (EKDANKEFSTY) lie on the Extracellular side of the membrane. Residues 299–319 (ADALWWGTITLTTIGYGDKTP) constitute an intramembrane region (pore-forming). Over 320–325 (LTWLGR) the chain is Extracellular. The helical transmembrane segment at 326 to 346 (LLSAGFALLGISFFALPAGIL) threads the bilayer. The Cytoplasmic segment spans residues 347 to 932 (GSGFALKVQE…ALSLPHVKLK (586 aa)). An a 1,2-diacyl-sn-glycero-3-phospho-(1D-myo-inositol-4,5-bisphosphate)-binding site is contributed by K361. Positions 370–378 (AANLIQCVW) are interaction with CALM. Residues 404–465 (SPTKKEQGEA…GSPTKVQKSW (62 aa)) are disordered. The span at 431–440 (RGQSIKSRQA) shows a compositional bias: polar residues. Position 447 is a phosphoserine (S447). The tract at residues 521–528 (VIRAIRIM) is interaction with CALM. Residues 655–678 (SDYQSPVDSKDLSGSAQNSGCLSR) form a disordered region. At S831 the chain carries Phosphoserine. A compositionally biased stretch (acidic residues) spans 876–885 (VGPEETETDT). Residues 876–919 (VGPEETETDTFDAAPQPAREAAFASDSLRTGRSRSSQSICKAGE) are disordered. Over residues 888–899 (AAPQPAREAAFA) the composition is skewed to low complexity. The segment covering 902–914 (SLRTGRSRSSQSI) has biased composition (polar residues).

The protein belongs to the potassium channel family. KQT (TC 1.A.1.15) subfamily. Kv7.5/KCNQ5 sub-subfamily. Homotetramer; forms a functional homotetrameric channel resulting in the expression of a small M-current. Heterotetramer with KCNQ3; forms heterotetrameric M-channel responsible for the native M-current. Heterotetramer with KCNQ1; forms a functional voltage-gated potassium channel. Interacts (via C-terminus) with calmodulin/CALM1; forms a heterooctameric structure (with 4:4 KCNQ1:CALM stoichiometry); the interaction is calcium-independent, constitutive and participates in the channel function. In terms of tissue distribution, strongly expressed in brain and skeletal muscle. In brain, expressed in cerebral cortex, occipital pole, frontal lobe and temporal lobe. Lower levels in hippocampus and putamen. Low to undetectable levels in medulla, cerebellum and thalamus.

It localises to the cell membrane. It carries out the reaction K(+)(in) = K(+)(out). With respect to regulation, phosphatidylinositol-4,5-bisphosphate (PIP2) is essential to activate KCNQ5 channel by inducing the coupling of the voltage-sensing domain (VSD) and the pore-forming domain (PD). Calcium suppresses KCNQ5 channel current through calcium-bound CALM C-terminus. Therefore CALM acts as calcium sensor that controls channel activity. Activated by niflumic acid and the anticonvulsant retigabine. Inhibited by barium, linopirdine, XE991 and tetraethylammonium (as homomer). Insensitive to tetraethylammonium in KCNQ3-KCNQ5 heteromers. In terms of biological role, pore-forming subunit of the voltage-gated potassium (Kv) channel broadly expressed in brain and involved in the regulation of neuronal excitability. Associates with KCNQ3/Kv7.3 pore-forming subunit to form a potassium channel which contributes to M-type current, a slowly activating and deactivating potassium conductance which plays a critical role in determining the subthreshold electrical excitability of neurons. Contributes, with other potassium channels, to the molecular diversity of a heterogeneous population of M-channels, varying in kinetic and pharmacological properties, which underlie this physiologically important current. Also forms a functional channel with KCNQ1/Kv7.1 subunit that may contribute to vasoconstriction and hypertension. Channel may be selectively permeable in vitro to other cations besides potassium, in decreasing order of affinity K(+) = Rb(+) &gt; Cs(+) &gt; Na(+). Similar to the native M-channel, KCNQ3-KCNQ5 potassium channel is suppressed by activation of the muscarinic acetylcholine receptor CHRM1. In Homo sapiens (Human), this protein is Potassium voltage-gated channel subfamily KQT member 5.